The sequence spans 279 residues: Ribosomal RNA small subunit methyltransferase I (279 aa).

This sequence belongs to the methyltransferase superfamily. RsmI family.

The protein resides in the cytoplasm. It carries out the reaction cytidine(1402) in 16S rRNA + S-adenosyl-L-methionine = 2'-O-methylcytidine(1402) in 16S rRNA + S-adenosyl-L-homocysteine + H(+). Functionally, catalyzes the 2'-O-methylation of the ribose of cytidine 1402 (C1402) in 16S rRNA. In Synechocystis sp. (strain ATCC 27184 / PCC 6803 / Kazusa), this protein is Ribosomal RNA small subunit methyltransferase I.